The sequence spans 214 residues: Ras-related protein RABA2b (214 aa).

19–26 (GDSGVGKS) lines the GTP pocket. The Effector region signature appears at 41–49 (SKSTIGVEF). Residues 67-71 (DTAGQ), 125-128 (NKSD), and 155-156 (SA) each bind GTP. Residues Cys-211 and Cys-212 are each lipidated (S-geranylgeranyl cysteine).

It belongs to the small GTPase superfamily. Rab family. In terms of tissue distribution, expressed in root tips.

It is found in the endosome membrane. The protein resides in the golgi apparatus. The protein localises to the trans-Golgi network membrane. Its function is as follows. Intracellular vesicle trafficking and protein transport. The polypeptide is Ras-related protein RABA2b (RABA2B) (Arabidopsis thaliana (Mouse-ear cress)).